The sequence spans 808 residues: Phospholipase D alpha 1 (808 aa).

Residues 1–125 enclose the C2 domain; sequence MAQILLHGTL…LEGEEIDKWV (125 aa). D186 contacts Ca(2+). One can recognise a PLD phosphodiesterase 1 domain in the interval 326–364; that stretch reads TMFTHHQKIVVVDSELPSGESEKRRILSFVGGIDLCDGR. Residues H331, K333, and D338 contribute to the active site. Residue H331 participates in a 1,2-diacyl-sn-glycero-3-phosphate binding. Positions 370 and 404 each coordinate Ca(2+). A 1,2-diacyl-sn-glycero-3-phosphate-binding residues include Q520 and H659. One can recognise a PLD phosphodiesterase 2 domain in the interval 654–681; it reads FMIYVHSKMMIVDDEYIIVGSANINQRS. Catalysis depends on residues H659, K661, and D666. E720 is a binding site for Ca(2+).

This sequence belongs to the phospholipase D family. C2-PLD subfamily. Ca(2+) is required as a cofactor.

The catalysed reaction is a 1,2-diacyl-sn-glycero-3-phosphocholine + H2O = a 1,2-diacyl-sn-glycero-3-phosphate + choline + H(+). In terms of biological role, hydrolyzes glycerol-phospholipids at the terminal phosphodiesteric bond. Plays an important role in various cellular processes. The polypeptide is Phospholipase D alpha 1 (PLD1) (Nicotiana tabacum (Common tobacco)).